The sequence spans 666 residues: Transketolase (666 aa).

Histidine 28 is a substrate binding site. Thiamine diphosphate contacts are provided by residues histidine 68 and glycine 116–leucine 118. Position 157 (aspartate 157) interacts with Mg(2+). The thiamine diphosphate site is built by glycine 158 and asparagine 187. Residues asparagine 187 and isoleucine 189 each coordinate Mg(2+). Residues histidine 262, arginine 356, and serine 383 each coordinate substrate. Thiamine diphosphate is bound at residue histidine 262. The active-site Proton donor is the glutamate 410. Phenylalanine 436 provides a ligand contact to thiamine diphosphate. Substrate is bound by residues histidine 460, aspartate 468, and arginine 519.

It belongs to the transketolase family. In terms of assembly, homodimer. Requires Mg(2+) as cofactor. Ca(2+) is required as a cofactor. It depends on Mn(2+) as a cofactor. The cofactor is Co(2+). Thiamine diphosphate serves as cofactor.

The catalysed reaction is D-sedoheptulose 7-phosphate + D-glyceraldehyde 3-phosphate = aldehydo-D-ribose 5-phosphate + D-xylulose 5-phosphate. In terms of biological role, catalyzes the transfer of a two-carbon ketol group from a ketose donor to an aldose acceptor, via a covalent intermediate with the cofactor thiamine pyrophosphate. This is Transketolase (tkt) from Halalkalibacterium halodurans (strain ATCC BAA-125 / DSM 18197 / FERM 7344 / JCM 9153 / C-125) (Bacillus halodurans).